The primary structure comprises 635 residues: Threonine--tRNA ligase (635 aa).

Positions 1–61 (MIVITLPDGS…EGDARLAIVT (61 aa)) constitute a TGS domain. Residues 242 to 533 (DHRKLGRELD…LIEQHAGALP (292 aa)) are catalytic. Zn(2+) is bound by residues Cys333, His384, and His510.

The protein belongs to the class-II aminoacyl-tRNA synthetase family. Homodimer. The cofactor is Zn(2+).

It localises to the cytoplasm. It catalyses the reaction tRNA(Thr) + L-threonine + ATP = L-threonyl-tRNA(Thr) + AMP + diphosphate + H(+). In terms of biological role, catalyzes the attachment of threonine to tRNA(Thr) in a two-step reaction: L-threonine is first activated by ATP to form Thr-AMP and then transferred to the acceptor end of tRNA(Thr). Also edits incorrectly charged L-seryl-tRNA(Thr). The chain is Threonine--tRNA ligase from Methylibium petroleiphilum (strain ATCC BAA-1232 / LMG 22953 / PM1).